Reading from the N-terminus, the 156-residue chain is Ribosome maturation factor RimP (156 aa).

The protein belongs to the RimP family.

It localises to the cytoplasm. Functionally, required for maturation of 30S ribosomal subunits. The protein is Ribosome maturation factor RimP of Bacillus mycoides (strain KBAB4) (Bacillus weihenstephanensis).